Here is a 381-residue protein sequence, read N- to C-terminus: Peptidoglycan glycosyltransferase MrdB (381 aa).

The next 10 helical transmembrane spans lie at phenylalanine 11–phenylalanine 31, lysine 40–phenylalanine 60, tryptophan 66–tyrosine 86, phenylalanine 99–alanine 119, tyrosine 132–leucine 152, aspartate 156–leucine 176, valine 180–histidine 200, phenylalanine 263–phenylalanine 283, isoleucine 297–threonine 317, and leucine 328–leucine 348.

It belongs to the SEDS family. MrdB/RodA subfamily.

Its subcellular location is the cell inner membrane. The enzyme catalyses [GlcNAc-(1-&gt;4)-Mur2Ac(oyl-L-Ala-gamma-D-Glu-L-Lys-D-Ala-D-Ala)](n)-di-trans,octa-cis-undecaprenyl diphosphate + beta-D-GlcNAc-(1-&gt;4)-Mur2Ac(oyl-L-Ala-gamma-D-Glu-L-Lys-D-Ala-D-Ala)-di-trans,octa-cis-undecaprenyl diphosphate = [GlcNAc-(1-&gt;4)-Mur2Ac(oyl-L-Ala-gamma-D-Glu-L-Lys-D-Ala-D-Ala)](n+1)-di-trans,octa-cis-undecaprenyl diphosphate + di-trans,octa-cis-undecaprenyl diphosphate + H(+). It functions in the pathway cell wall biogenesis; peptidoglycan biosynthesis. Peptidoglycan polymerase that is essential for cell wall elongation. This is Peptidoglycan glycosyltransferase MrdB from Helicobacter pylori (strain ATCC 700392 / 26695) (Campylobacter pylori).